The sequence spans 228 residues: DNA-binding response regulator MtrA (228 aa).

One can recognise a Response regulatory domain in the interval 7-120; sequence RILVVDDDPS…ELVARVRARL (114 aa). Asp56 carries the post-translational modification 4-aspartylphosphate. Residues 128-227 constitute a DNA-binding region (ompR/PhoB-type); it reads AEMLSIGDVE…VRGVGYKAGP (100 aa).

Probably a monomer when inactive, phosphorylation may permit it to oligomerize. The monomeric form does not seem to be phosphorylated. Post-translationally, phosphorylated by MtrB.

The protein resides in the cytoplasm. Its function is as follows. Member of the two-component regulatory system MtrA/MtrB, responding to environmental signals. Controls expression of a number of genes including dnaA, ripA, fbpB and probably itself. Probably plays a role in cell division. The chain is DNA-binding response regulator MtrA (mtrA) from Mycolicibacterium smegmatis (strain ATCC 700084 / mc(2)155) (Mycobacterium smegmatis).